Consider the following 175-residue polypeptide: Bifunctional protein PyrR (175 aa).

Residues 98 to 110 carry the PRPP-binding motif; sequence VIIIDDVLYTGRT.

Belongs to the purine/pyrimidine phosphoribosyltransferase family. PyrR subfamily. Homodimer and homohexamer; in equilibrium.

It catalyses the reaction UMP + diphosphate = 5-phospho-alpha-D-ribose 1-diphosphate + uracil. Regulates transcriptional attenuation of the pyrimidine nucleotide (pyr) operon by binding in a uridine-dependent manner to specific sites on pyr mRNA. This disrupts an antiterminator hairpin in the RNA and favors formation of a downstream transcription terminator, leading to a reduced expression of downstream genes. Functionally, also displays a weak uracil phosphoribosyltransferase activity which is not physiologically significant. In Staphylococcus carnosus (strain TM300), this protein is Bifunctional protein PyrR.